Consider the following 1388-residue polypeptide: Dicer-like protein 2 (1388 aa).

The region spanning 23 to 203 is the Helicase ATP-binding domain; sequence MLEASMKENI…LLMVESNLDA (181 aa). 36–43 is a binding site for ATP; it reads MDTGSGKT. The DEAH box motif lies at 144 to 147; it reads DEAH. The Helicase C-terminal domain occupies 368–537; it reads KFESLLNFLD…DDERQLQSVS (170 aa). Residues 564–658 enclose the Dicer dsRNA-binding fold domain; it reads AMAHLHHFCA…LPLTKKPELK (95 aa). 2 consecutive RNase III domains span residues 906-1059 and 1098-1281; these read ISAI…VDGG and NDRL…VDSG. Positions 1137, 1267, and 1270 each coordinate Mg(2+).

It belongs to the helicase family. Dicer subfamily. Mg(2+) is required as a cofactor. Mn(2+) serves as cofactor.

Functionally, dicer-like endonuclease involved in cleaving double-stranded RNA in the RNA interference (RNAi) pathway. Produces 21 to 25 bp dsRNAs (siRNAs) which target the selective destruction of homologous RNAs leading to sequence-specific suppression of gene expression, called post-transcriptional gene silencing (PTGS). Part of a broad host defense response against viral infection and transposons. This Aspergillus fumigatus (strain ATCC MYA-4609 / CBS 101355 / FGSC A1100 / Af293) (Neosartorya fumigata) protein is Dicer-like protein 2 (dcl2).